The primary structure comprises 249 residues: MIKIKDVEKSYQSAHVFKRRRTPIVKGVSFECPIGATIAIIGESGSGKSTLSRMILGIEKPDKGCVTLNDQPMHKKKVRRHQIGAVFQDYTSSLHPFQTVREILFEVMCQCDGQPKEVMEVQAITLLEEVGLSKAYMDKYPNMLSGGEAQRVAIARAICINPKYILFDEAISSLDMSIQTQILDLLIHLRETRQLSYIFITHDIQAATYLCDQLIIFKNGKIEEQIPTSALHKSDNAYTRELIEKQLSF.

The ABC transporter domain occupies 2–244 (IKIKDVEKSY…DNAYTRELIE (243 aa)). 42-49 (GESGSGKS) lines the ATP pocket.

This sequence belongs to the ABC transporter superfamily. As to quaternary structure, the complex is composed of two ATP-binding proteins (CntD and CntF), two transmembrane proteins (CntB and CntC) and a solute-binding protein (CntA).

It is found in the cell membrane. Nickel/cobalt import is reduced in the presence of zinc. In terms of biological role, part of the ABC transporter complex CntABCDF (Opp1) involved in the uptake of metal in complex with the metallophore staphylopine (StP). Involved in the import of divalent metals ions such as nickel, cobalt and zinc. Probably responsible for energy coupling to the transport system. Plays a major role in nickel/cobalt import in zinc-depleted conditions. Contributes to virulence. Required for full urease activity in vitro. In Staphylococcus aureus (strain NCTC 8325 / PS 47), this protein is Metal-staphylopine import system ATP-binding protein CntF.